A 100-amino-acid polypeptide reads, in one-letter code: Osteocalcin (100 aa).

Positions 1–23 (MRALTLLALLALAALCIAGQAGA) are cleaved as a signal peptide. The propeptide occupies 24–51 (KPSGAESSKGAAFVSKQEGSEVVKRPRR). The Gla domain maps to 52 to 98 (YLYQWLGAPVPYPDPLEPRREVCELNPDCDELADHIGFQEAYRRFYG). The Ca(2+) site is built by Glu-68, Glu-72, Glu-75, and Asp-81. At Glu-68 the chain carries 4-carboxyglutamate; partial. Residues Glu-72 and Glu-75 each carry the 4-carboxyglutamate modification. Cysteines 74 and 80 form a disulfide.

This sequence belongs to the osteocalcin/matrix Gla protein family. Gamma-carboxyglutamate residues are formed by vitamin K dependent carboxylation by GGCX. These residues are essential for the binding of calcium. Decarboxylation promotes the hormone activity.

Its subcellular location is the secreted. Bone protein that constitutes 1-2% of the total bone protein, and which acts as a negative regulator of bone formation. Functions to limit bone formation without impairing bone resorption or mineralization. It binds strongly to apatite and calcium. Functionally, the uncarboxylated form acts as a hormone secreted by osteoblasts, which regulates different cellular processes, such as energy metabolism, male fertility and brain development. Regulates of energy metabolism by acting as a hormone favoring pancreatic beta-cell proliferation, insulin secretion and sensitivity and energy expenditure. Uncarboxylated osteocalcin hormone also promotes testosterone production in the testes: acts as a ligand for G protein-coupled receptor GPRC6A at the surface of Leydig cells, initiating a signaling response that promotes the expression of enzymes required for testosterone synthesis in a CREB-dependent manner. Also acts as a regulator of brain development: osteocalcin hormone crosses the blood-brain barrier and acts as a ligand for GPR158 on neurons, initiating a signaling response that prevents neuronal apoptosis in the hippocampus, favors the synthesis of all monoamine neurotransmitters and inhibits that of gamma-aminobutyric acid (GABA). Osteocalcin also crosses the placenta during pregnancy and maternal osteocalcin is required for fetal brain development. The polypeptide is Osteocalcin (BGLAP) (Homo sapiens (Human)).